A 759-amino-acid polypeptide reads, in one-letter code: Glucosylceramidase (759 aa).

The Proton donor role is filled by Glu247. The active-site Nucleophile is Glu497. The tract at residues 576 to 600 is disordered; sequence AFENESQRDPQSPAYSESQRNTESY. Positions 584-599 are enriched in polar residues; the sequence is DPQSPAYSESQRNTES.

Belongs to the glycosyl hydrolase 5 (cellulase A) family.

Its subcellular location is the membrane. The catalysed reaction is a beta-D-glucosyl-(1&lt;-&gt;1')-N-acylsphing-4-enine + H2O = an N-acylsphing-4-enine + D-glucose. Its function is as follows. Specifically hydrolyzes the glucosidic linkage in glucosylceramide. May prevent accumulation of aberrent glucosylceramide containing immature ceramide. This chain is Glucosylceramidase, found in Aspergillus fumigatus (Neosartorya fumigata).